Here is a 259-residue protein sequence, read N- to C-terminus: Hydroxyethylthiazole kinase 1 (259 aa).

Methionine 38 is a binding site for substrate. Residues arginine 113 and serine 158 each contribute to the ATP site. Glycine 185 lines the substrate pocket.

Belongs to the Thz kinase family. Mg(2+) serves as cofactor.

It catalyses the reaction 5-(2-hydroxyethyl)-4-methylthiazole + ATP = 4-methyl-5-(2-phosphooxyethyl)-thiazole + ADP + H(+). It functions in the pathway cofactor biosynthesis; thiamine diphosphate biosynthesis; 4-methyl-5-(2-phosphoethyl)-thiazole from 5-(2-hydroxyethyl)-4-methylthiazole: step 1/1. Functionally, catalyzes the phosphorylation of the hydroxyl group of 4-methyl-5-beta-hydroxyethylthiazole (THZ). This Leuconostoc mesenteroides subsp. mesenteroides (strain ATCC 8293 / DSM 20343 / BCRC 11652 / CCM 1803 / JCM 6124 / NCDO 523 / NBRC 100496 / NCIMB 8023 / NCTC 12954 / NRRL B-1118 / 37Y) protein is Hydroxyethylthiazole kinase 1.